Reading from the N-terminus, the 540-residue chain is Serine/threonine-protein phosphatase ppzA (540 aa).

2 disordered regions span residues M1–H108 and V120–K140. Polar residues-rich tracts occupy residues S15–R24 and S45–G54. Over residues A62 to Q88 the composition is skewed to low complexity. Residues P89 to P98 are compositionally biased toward pro residues. Low complexity predominate over residues P127–P136. Residues D239, H241, D267, and N299 each contribute to the Mn(2+) site. The Phosphatase tensin-type domain maps to P258–R540. Residue H300 is the Proton donor of the active site. Mn(2+) contacts are provided by H348 and H423.

It belongs to the PPP phosphatase family. PP-Z subfamily. As to quaternary structure, interacts with at least 54 proteins, of which 31 are detected only after iron starvation and 22 are detected only in control conditions. Only the regulatory subunit of the protein phosphatase PP1 (Afu1g04800/AFUB_005140) interacts with ppzA in both conditions. Mn(2+) is required as a cofactor.

The protein resides in the cytoplasm. The enzyme catalyses O-phospho-L-seryl-[protein] + H2O = L-seryl-[protein] + phosphate. It carries out the reaction O-phospho-L-threonyl-[protein] + H2O = L-threonyl-[protein] + phosphate. Catalytic subunit of protein phosphatase Z (PPZ) involved in iron assimilation. Regulates secondary metabolites production, including gliotoxin, pyripyropene A, fumagillin, fumiquinazoline A, triacetyl-fusarinine C, and helvolic acid. Plays a key role in pathogenicity. The protein is Serine/threonine-protein phosphatase ppzA of Aspergillus fumigatus (strain CBS 144.89 / FGSC A1163 / CEA10) (Neosartorya fumigata).